The primary structure comprises 229 residues: Cytochrome c oxidase subunit 2 (229 aa).

Residues 1-14 (MANHLQFNFQDATS) are Mitochondrial intermembrane-facing. The chain crosses the membrane as a helical span at residues 15–45 (PLMQELVKFHDHSLTILFFISALILYVLMMT). Over 46-59 (SLSKLTNKNILDSQ) the chain is Mitochondrial matrix. A helical membrane pass occupies residues 60–87 (EIEMVWTVIPAFILIMLALPSIQILYLM). The Mitochondrial intermembrane portion of the chain corresponds to 88–229 (DEIASPDITI…FESWIIKLSL (142 aa)). 6 residues coordinate Cu cation: His162, Cys197, Glu199, Cys201, His205, and Met208. Glu199 contacts Mg(2+).

This sequence belongs to the cytochrome c oxidase subunit 2 family. As to quaternary structure, component of the cytochrome c oxidase (complex IV, CIV), a multisubunit enzyme composed of 14 subunits. The complex is composed of a catalytic core of 3 subunits MT-CO1, MT-CO2 and MT-CO3, encoded in the mitochondrial DNA, and 11 supernumerary subunits COX4I, COX5A, COX5B, COX6A, COX6B, COX6C, COX7A, COX7B, COX7C, COX8 and NDUFA4, which are encoded in the nuclear genome. The complex exists as a monomer or a dimer and forms supercomplexes (SCs) in the inner mitochondrial membrane with NADH-ubiquinone oxidoreductase (complex I, CI) and ubiquinol-cytochrome c oxidoreductase (cytochrome b-c1 complex, complex III, CIII), resulting in different assemblies (supercomplex SCI(1)III(2)IV(1) and megacomplex MCI(2)III(2)IV(2)). Found in a complex with TMEM177, COA6, COX18, COX20, SCO1 and SCO2. Interacts with TMEM177 in a COX20-dependent manner. Interacts with COX20. Interacts with COX16. The cofactor is Cu cation.

It is found in the mitochondrion inner membrane. The catalysed reaction is 4 Fe(II)-[cytochrome c] + O2 + 8 H(+)(in) = 4 Fe(III)-[cytochrome c] + 2 H2O + 4 H(+)(out). Functionally, component of the cytochrome c oxidase, the last enzyme in the mitochondrial electron transport chain which drives oxidative phosphorylation. The respiratory chain contains 3 multisubunit complexes succinate dehydrogenase (complex II, CII), ubiquinol-cytochrome c oxidoreductase (cytochrome b-c1 complex, complex III, CIII) and cytochrome c oxidase (complex IV, CIV), that cooperate to transfer electrons derived from NADH and succinate to molecular oxygen, creating an electrochemical gradient over the inner membrane that drives transmembrane transport and the ATP synthase. Cytochrome c oxidase is the component of the respiratory chain that catalyzes the reduction of oxygen to water. Electrons originating from reduced cytochrome c in the intermembrane space (IMS) are transferred via the dinuclear copper A center (CU(A)) of subunit 2 and heme A of subunit 1 to the active site in subunit 1, a binuclear center (BNC) formed by heme A3 and copper B (CU(B)). The BNC reduces molecular oxygen to 2 water molecules using 4 electrons from cytochrome c in the IMS and 4 protons from the mitochondrial matrix. This Myxine glutinosa (Atlantic hagfish) protein is Cytochrome c oxidase subunit 2 (MT-CO2).